Reading from the N-terminus, the 601-residue chain is Phosphomethylpyrimidine synthase (601 aa).

Substrate is bound by residues Asn-224, Met-253, Tyr-282, His-318, 338–340, 379–382, and Glu-418; these read SRG and DGLR. His-422 contributes to the Zn(2+) binding site. Tyr-445 serves as a coordination point for substrate. Position 486 (His-486) interacts with Zn(2+). [4Fe-4S] cluster contacts are provided by Cys-566, Cys-569, and Cys-574.

This sequence belongs to the ThiC family. Homodimer. [4Fe-4S] cluster is required as a cofactor.

It catalyses the reaction 5-amino-1-(5-phospho-beta-D-ribosyl)imidazole + S-adenosyl-L-methionine = 4-amino-2-methyl-5-(phosphooxymethyl)pyrimidine + CO + 5'-deoxyadenosine + formate + L-methionine + 3 H(+). The protein operates within cofactor biosynthesis; thiamine diphosphate biosynthesis. Catalyzes the synthesis of the hydroxymethylpyrimidine phosphate (HMP-P) moiety of thiamine from aminoimidazole ribotide (AIR) in a radical S-adenosyl-L-methionine (SAM)-dependent reaction. In Xylella fastidiosa (strain 9a5c), this protein is Phosphomethylpyrimidine synthase.